A 248-amino-acid chain; its full sequence is 1-(5-phosphoribosyl)-5-[(5-phosphoribosylamino)methylideneamino] imidazole-4-carboxamide isomerase (248 aa).

The Proton acceptor role is filled by Asp-8. Catalysis depends on Asp-129, which acts as the Proton donor.

It belongs to the HisA/HisF family.

The protein localises to the cytoplasm. The enzyme catalyses 1-(5-phospho-beta-D-ribosyl)-5-[(5-phospho-beta-D-ribosylamino)methylideneamino]imidazole-4-carboxamide = 5-[(5-phospho-1-deoxy-D-ribulos-1-ylimino)methylamino]-1-(5-phospho-beta-D-ribosyl)imidazole-4-carboxamide. It functions in the pathway amino-acid biosynthesis; L-histidine biosynthesis; L-histidine from 5-phospho-alpha-D-ribose 1-diphosphate: step 4/9. The protein is 1-(5-phosphoribosyl)-5-[(5-phosphoribosylamino)methylideneamino] imidazole-4-carboxamide isomerase of Rhizobium leguminosarum bv. trifolii (strain WSM2304).